Here is a 96-residue protein sequence, read N- to C-terminus: Class I hydrophobin 3 (96 aa).

Residues 1-18 (MQFAKIASVLAMAAAAVA) form the signal peptide. Cystine bridges form between cysteine 43–cysteine 72, cysteine 51–cysteine 66, cysteine 52–cysteine 57, and cysteine 73–cysteine 92.

Belongs to the fungal hydrophobin family.

The protein localises to the secreted. The protein resides in the cell wall. Functionally, aerial growth, conidiation, and dispersal of filamentous fungi in the environment rely upon a capability of their secreting small amphipathic proteins called hydrophobins (HPBs) with low sequence identity. Class I can self-assemble into an outermost layer of rodlet bundles on aerial cell surfaces, conferring cellular hydrophobicity that supports fungal growth, development and dispersal; whereas Class II form highly ordered films at water-air interfaces through intermolecular interactions but contribute nothing to the rodlet structure. Does not seem to be important for the ability to cause seedling disease. This chain is Class I hydrophobin 3, found in Gibberella moniliformis (Maize ear and stalk rot fungus).